The following is a 614-amino-acid chain: Zinc metalloproteinase-disintegrin-like HR1b (614 aa).

Residues 1 to 20 form the signal peptide; it reads MIQVLLVTICLAVFPYQGSS. Residues 21-191 constitute a propeptide that is removed on maturation; that stretch reads IILESGNVND…KASKLVVTAE (171 aa). Gln-192 is subject to Pyrrolidone carboxylic acid. One can recognise a Peptidase M12B domain in the interval 198–394; the sequence is RYIKLAIVVD…HKPQCILNAP (197 aa). N-linked (GlcNAc...) asparagine glycosylation occurs at Asn-264. Cystine bridges form between Cys-309/Cys-389, Cys-349/Cys-373, and Cys-351/Cys-356. His-334 lines the Zn(2+) pocket. The active site involves Glu-335. The Zn(2+) site is built by His-338 and His-344. Asn-372 carries an N-linked (GlcNAc...) asparagine glycan. A propeptide spanning residues 395–398 is cleaved from the precursor; the sequence is SKTD. The 87-residue stretch at 402–488 folds into the Disintegrin domain; it reads PPVCGNELLE…DCPTDRFHRN (87 aa). Val-404, Asn-407, Leu-409, Glu-411, Glu-414, and Asp-417 together coordinate Ca(2+). 22 cysteine pairs are disulfide-bonded: Cys-405/Cys-424, Cys-405/Cys-434, Cys-416/Cys-429, Cys-416/Cys-434, Cys-418/Cys-424, Cys-428/Cys-451, Cys-442/Cys-448, Cys-447/Cys-473, Cys-460/Cys-480, Cys-467/Cys-492, Cys-467/Cys-499, Cys-492/Cys-504, Cys-499/Cys-504, Cys-511/Cys-526, Cys-511/Cys-561, Cys-526/Cys-568, Cys-539/Cys-549, Cys-549/Cys-556, Cys-556/Cys-593, Cys-561/Cys-568, Cys-587/Cys-598, and Cys-593/Cys-598. The D/ECD-tripeptide signature appears at 466–468; that stretch reads ECD. Residue Asn-518 is glycosylated (N-linked (GlcNAc...) asparagine). An N-linked (GlcNAc...) asparagine glycan is attached at Asn-571. Residues 608–614 constitute a propeptide that is removed on maturation; that stretch reads TTVFSLI.

The protein belongs to the venom metalloproteinase (M12B) family. P-III subfamily. P-IIIb sub-subfamily. Monomer. Zn(2+) is required as a cofactor. In terms of tissue distribution, expressed by the venom gland.

The protein localises to the secreted. Functionally, zinc protease that induces hemorrhage. Has preference for Tyr, Leu, Arg, Met, and Phe at the P1 position, in descending order (in vitro). Shows equal preference for the sequences of Ala-Asp and Arg-Ile at the P3-P2 position with different enzyme cleavage sites across the P1 position: the N-terminus side for Ala-Asp and the C-terminus side for Arg-Ile. Its function is as follows. Inhibits platelet aggregation induced by ADP, thrombin, platelet-activating factor and collagen. Acts by inhibiting fibrinogen interaction with platelet receptors alpha-IIb/beta-3 (ITGA2B/ITGB3). This Protobothrops flavoviridis (Habu) protein is Zinc metalloproteinase-disintegrin-like HR1b.